The chain runs to 131 residues: Small ribosomal subunit protein uS11 (131 aa).

Belongs to the universal ribosomal protein uS11 family. As to quaternary structure, part of the 30S ribosomal subunit. Interacts with proteins S7 and S18. Binds to IF-3.

Located on the platform of the 30S subunit, it bridges several disparate RNA helices of the 16S rRNA. Forms part of the Shine-Dalgarno cleft in the 70S ribosome. This Neisseria gonorrhoeae (strain ATCC 700825 / FA 1090) protein is Small ribosomal subunit protein uS11.